We begin with the raw amino-acid sequence, 363 residues long: MFKRHKSLASERKRALLSQRATRFILKDDMRNFHFLSKLVLSAGPLRPTPAVKHSKTTHFEIEIFDAQTRKQICILDKVTQSSTIHDVKQKFHKACPKWYPSRVGLQLECGGPFLKDYITIQSIAASSIVTLYATDLGQQVSWTTVFLAEYTGPLLIYLLFYLRIPCIYDGKESARRLRHPVVHLACFCHCIHYIRYLLETLFVHKVSAGHTPLKNLIMSCAFYWGFTSWIAYYINHPLYTPPSFGNRQITVSAINFLICEAGNHFINVMLSHPNHTGNNACFPSPNYNPFTWMFFLVSCPNYTYEIGSWISFTVMTQTLPVGIFTLLMSIQMSLWAQKKHKIYLRKFNSYIHRKSAMIPFIL.

Serine 37 is modified (phosphoserine). A run of 3 helical transmembrane segments spans residues 143 to 163, 217 to 237, and 311 to 331; these read WTTV…LFYL, LIMS…YINH, and ISFT…LMSI.

This sequence belongs to the steroid 5-alpha reductase family. In terms of tissue distribution, predominantly expressed in the heart and skeletal muscle.

The protein localises to the membrane. Its subcellular location is the endoplasmic reticulum. This Homo sapiens (Human) protein is Trans-2,3-enoyl-CoA reductase-like (TECRL).